A 596-amino-acid chain; its full sequence is Transcription factor EGL1 (596 aa).

Residues 401–450 enclose the bHLH domain; that stretch reads EETGNHALSEKKRREKLNERFMTLRSIIPSISKIDKVSILDDTIEYLQDL.

Efficient DNA binding requires dimerization with another bHLH protein. Homodimer and heterodimer with GL3. Interacts with CPC, MYB0/GL1, MYB5, MYB23, MYB113, MYB114, MYB75/PAP1, MYB90/PAP2, TT2, TRY, TTG1 and MYB66/WER. In terms of tissue distribution, ubiquitous with higher levels in buds and flowers. Specifically localized in developing root hair cells. Expressed in epidermal root hair cells (trichoblasts) and moves to root hairless cells (atrichoblasts) by a cell-to-cell movement through plasmodesmata (at protein level).

It is found in the nucleus. In terms of biological role, transcription activator, when associated with MYB75/PAP1, MYB90/PAP2 or TT2. Involved in epidermal cell fate specification. Negatively regulates stomata formation but promotes trichome formation. Together with MYB66/WER, promotes the formation of non-hair cells in root epidermis cells in the N position. Whereas together with CPC, promotes the formation of hair cells in root epidermis cells in the H position by inhibiting non-hair cell formation. Also seems to play a role in the activation of anthocyanin biosynthesis, probably together with MYB75/PAP1. Involved in seed mucilage production. Activates the transcription of GL2. The sequence is that of Transcription factor EGL1 (BHLH2) from Arabidopsis thaliana (Mouse-ear cress).